The following is a 197-amino-acid chain: 3-isopropylmalate dehydratase small subunit (197 aa).

The protein belongs to the LeuD family. LeuD type 1 subfamily. As to quaternary structure, heterodimer of LeuC and LeuD.

It carries out the reaction (2R,3S)-3-isopropylmalate = (2S)-2-isopropylmalate. The protein operates within amino-acid biosynthesis; L-leucine biosynthesis; L-leucine from 3-methyl-2-oxobutanoate: step 2/4. In terms of biological role, catalyzes the isomerization between 2-isopropylmalate and 3-isopropylmalate, via the formation of 2-isopropylmaleate. In Shouchella clausii (strain KSM-K16) (Alkalihalobacillus clausii), this protein is 3-isopropylmalate dehydratase small subunit.